A 456-amino-acid polypeptide reads, in one-letter code: UDP-N-acetylmuramate--L-alanine ligase (456 aa).

118-124 provides a ligand contact to ATP; that stretch reads GTHGKST.

Belongs to the MurCDEF family.

It localises to the cytoplasm. It carries out the reaction UDP-N-acetyl-alpha-D-muramate + L-alanine + ATP = UDP-N-acetyl-alpha-D-muramoyl-L-alanine + ADP + phosphate + H(+). The protein operates within cell wall biogenesis; peptidoglycan biosynthesis. Functionally, cell wall formation. This chain is UDP-N-acetylmuramate--L-alanine ligase, found in Paenarthrobacter aurescens (strain TC1).